An 83-amino-acid chain; its full sequence is MNNMSLEMLEKLEAKVQMAVDTISLLQMEIEELKETNESLTAEANELRSNRETLAQDNDKLQNDHQAWQERVRTLLGKMDHVE.

The stretch at 7–80 (EMLEKLEAKV…RVRTLLGKMD (74 aa)) forms a coiled coil.

It belongs to the ZapB family. As to quaternary structure, homodimer. The ends of the coiled-coil dimer bind to each other, forming polymers. Interacts with FtsZ.

The protein resides in the cytoplasm. Non-essential, abundant cell division factor that is required for proper Z-ring formation. It is recruited early to the divisome by direct interaction with FtsZ, stimulating Z-ring assembly and thereby promoting cell division earlier in the cell cycle. Its recruitment to the Z-ring requires functional FtsA or ZipA. This Photobacterium profundum (strain SS9) protein is Cell division protein ZapB.